A 244-amino-acid chain; its full sequence is Cobalt transport protein CbiM (244 aa).

Positions 1-20 (MRKITFIAALLSLLPRYALA) are cleaved as a signal peptide. Helical transmembrane passes span 31 to 51 (KWCL…LIYI), 63 to 83 (ILLG…LPSV), 95 to 115 (LGAI…VLLF), 117 to 137 (ALLL…SMAV), 161 to 181 (VFLG…LQLA), and 201 to 221 (IFAV…VIVL).

This sequence belongs to the CbiM family. As to quaternary structure, forms an energy-coupling factor (ECF) transporter complex composed of an ATP-binding protein (A component, CbiO), a transmembrane protein (T component, CbiQ) and 2 possible substrate-capture proteins (S components, CbiM and CbiN) of unknown stoichimetry.

Its subcellular location is the cell membrane. It functions in the pathway cofactor biosynthesis; adenosylcobalamin biosynthesis. Functionally, part of the energy-coupling factor (ECF) transporter complex CbiMNOQ involved in cobalt import. This chain is Cobalt transport protein CbiM, found in Thermosediminibacter oceani (strain ATCC BAA-1034 / DSM 16646 / JW/IW-1228P).